We begin with the raw amino-acid sequence, 384 residues long: Succinate--CoA ligase [ADP-forming] subunit beta (384 aa).

In terms of domain architecture, ATP-grasp spans 9 to 242 (KAILAQYKVP…LNEEDPLEVE (234 aa)). ATP contacts are provided by residues Lys-45, 52–54 (GRG), Glu-98, Leu-101, and Glu-106. Mg(2+) is bound by residues Asn-197 and Asp-211. Residues Asn-262 and 319–321 (GIL) each bind substrate.

The protein belongs to the succinate/malate CoA ligase beta subunit family. Heterotetramer of two alpha and two beta subunits. The cofactor is Mg(2+).

It catalyses the reaction succinate + ATP + CoA = succinyl-CoA + ADP + phosphate. It carries out the reaction GTP + succinate + CoA = succinyl-CoA + GDP + phosphate. Its pathway is carbohydrate metabolism; tricarboxylic acid cycle; succinate from succinyl-CoA (ligase route): step 1/1. Succinyl-CoA synthetase functions in the citric acid cycle (TCA), coupling the hydrolysis of succinyl-CoA to the synthesis of either ATP or GTP and thus represents the only step of substrate-level phosphorylation in the TCA. The beta subunit provides nucleotide specificity of the enzyme and binds the substrate succinate, while the binding sites for coenzyme A and phosphate are found in the alpha subunit. The sequence is that of Succinate--CoA ligase [ADP-forming] subunit beta from Solibacter usitatus (strain Ellin6076).